The chain runs to 287 residues: MDKKMRPVIKASLHYLALAIVSVIWLIPVYAMLINGFKSNFEVLSTPVLVPPTKITFEAYVSVLLSLAKPLINSLIIVIPTSFISAFLGAMGAYFFYTLSYSFSRASSAISDVLFSLISLATFIPQEATLLPLTRLIVSMGLLDSYIGIIFALLIFYIPTGALLMSMFISVIPRSLIEAAKMDGTGDLKIFMKIVFPLSMPGFISTLIFIIIQAWNNFFIPLVLVTTPGMKLTSIAVLSYSGAYGTLYNDTFAAGMVASIIPLAIFVFLGRYFIRGLMALGGGGKGV.

Transmembrane regions (helical) follow at residues 14-34 (HYLA…AMLI), 76-96 (IIVI…AYFF), 113-133 (VLFS…LLPL), 149-169 (IIFA…SMFI), 194-214 (IVFP…IIQA), 218-238 (FFIP…IAVL), and 250-270 (DTFA…VFLG). Residues 71-269 (LINSLIIVIP…IIPLAIFVFL (199 aa)) enclose the ABC transmembrane type-1 domain.

It belongs to the binding-protein-dependent transport system permease family. In terms of assembly, the complex is composed of two ATP-binding proteins (GlcV), two transmembrane proteins (GlcT and GlcU) and a solute-binding protein (GlcS).

Its subcellular location is the cell membrane. In terms of biological role, part of the ABC transporter complex GlcSTUV involved in glucose uptake. Responsible for the translocation of the substrate across the membrane. This chain is Glucose import system permease protein GlcU, found in Saccharolobus solfataricus (strain ATCC 35092 / DSM 1617 / JCM 11322 / P2) (Sulfolobus solfataricus).